Here is a 345-residue protein sequence, read N- to C-terminus: Ribonucleoside-diphosphate reductase small chain 2 (345 aa).

N-acetylmethionine is present on Met1. Tyr131 is a catalytic residue. 2 positions are modified to phosphoserine: Ser169 and Ser332. Thr334 carries the post-translational modification Phosphothreonine. Ser336 is subject to Phosphoserine. A Glycyl lysine isopeptide (Lys-Gly) (interchain with G-Cter in ubiquitin) cross-link involves residue Lys337.

The protein belongs to the ribonucleoside diphosphate reductase small chain family. As to quaternary structure, heterotetramer of two large (R1) and two small (R2) subunits. S.cerevisiae has two different R1 subunits (RNR1 and RNR3) and two different R2 subunits (RNR2 and RNR4). The functional form of the small subunits is a RNR2-RNR4 heterodimer, where RNR2 provides the iron-radical center and RNR4 is required for proper folding of RNR2 and assembly with the large subunits. Under normal growth conditions, the active form of the large subunits is a homodimer of the constitutively expressed RNR1. In damaged cells or cells arrested for DNA synthesis, the reductase consists of multiple species because of the association of the small subunits (RNR2-RNR4) with either the RNR1 homodimer or a heterodimer of RNR1 and the damage-inducible RNR3. Interacts with DIF1.

It localises to the nucleus. The catalysed reaction is a 2'-deoxyribonucleoside 5'-diphosphate + [thioredoxin]-disulfide + H2O = a ribonucleoside 5'-diphosphate + [thioredoxin]-dithiol. Its function is as follows. Provides the precursors necessary for DNA synthesis. Catalyzes the biosynthesis of deoxyribonucleotides from the corresponding ribonucleotides. RNR4 is required for proper folding of RNR2 and assembly with the large subunits. The protein is Ribonucleoside-diphosphate reductase small chain 2 (RNR4) of Saccharomyces cerevisiae (strain ATCC 204508 / S288c) (Baker's yeast).